Here is a 958-residue protein sequence, read N- to C-terminus: MIFLKLIKSIVIGLGLVSAIQAAPASSIGSSASASSSSESSQATIPNDVTLGVKQIPNIFNDSAVDANAAAKGYDLVNVTNTPRGLTGILKLKEATNIYGYDFDYLNLTVEYQADTRLNVHIEPTDLSDVFVLPEHLVVKPLVEGDAQSYNFDNSDLVFEYSNTDFSFEVIRSSTKEVLFSTKGNPLVFSNQFIQFNSSLPKNHVITGLGESIHGLVNEPGSVKTLFANDVGDPIDGNIYGVHPVYLDQRYDTETTHAVYWRTSAIQEVLIGEESITWRALSGVIDLYFFSGPTPKDAIQQYVKEIGLPAFQPYWSLGYHQCRWGYDTIEKLSEVVENFKKFNIPLETIWSDIDYMDSYKDFTYDPHRFPLDEYRKFLDELHKNNQHYVPILDAAIYVPNPNNATDNEYQPFHYGNETDVFLKNPDGSLYIGAVWQVTLFSRFLSRKHSDMDKVIKDWYELTPFDGIWADMNEVSSFCVGSCGTGKYFENPAYPPFTVGSKATSYPVGFDVSNASEWKSIQSSISATAKTSSTSSVSSSSSTIDYMNTLAPGKGNINYPPYAIYNMQGDSDLATHAVSPNATHADGTVEYDIHNLYGYLQENATYHALLEVFPNKRPFMISRSTFPRAGKWTGHWGGDNTADWAYAYFSIPQAFSMGIAGLPFFGADVCGFNGNSDSELCSRWMQLGSFFPFYRNHNYLGAIDQEPYVWESVAEATRTSMAIRYLLLPYYYTLLHESHTTGLPILRAFSWQFPNDRSLSGVDNQFFVGDGLVVTPVLEPGVDKVKGVFPGAGKEEVYYDWYTQREVHFKDGKNETLDAPLGHIPLHIRGGNVLPTQEPGYTVAESRQNPFGLIVALDNDGKAQGSLYLDDGESLVVDSSLLVSFSVSDNTLSASPSGDYKADQPLANVTILGVGHKPKSVKFENANVDFTYKKSTVFVTGLDKYTKDGAFSKDFTITW.

Positions 1-22 (MIFLKLIKSIVIGLGLVSAIQA) are cleaved as a signal peptide. 6 N-linked (GlcNAc...) asparagine glycosylation sites follow: Asn-61, Asn-78, Asn-107, Asn-197, Asn-403, and Asn-416. Residues Asp-470 and Glu-473 contribute to the active site. N-linked (GlcNAc...) asparagine glycosylation is found at Asn-513, Asn-580, and Asn-602. The active-site Proton donor is the Asp-638. Asn-813 and Asn-907 each carry an N-linked (GlcNAc...) asparagine glycan.

This sequence belongs to the glycosyl hydrolase 31 family.

It catalyses the reaction Hydrolysis of terminal (1-&gt;4)-linked alpha-D-glucose residues successively from non-reducing ends of the chains with release of beta-D-glucose.. This glucoamylase has a specificity toward both alpha-1,4 and alpha-1,6 linkages. This chain is Glucoamylase 1 (GAM1), found in Schwanniomyces occidentalis (Yeast).